The following is a 602-amino-acid chain: 4-hydroxy-3-methylbut-2-en-1-yl diphosphate synthase (flavodoxin) (602 aa).

[4Fe-4S] cluster contacts are provided by Cys508, Cys511, Cys543, and Glu550.

Belongs to the IspG family. It depends on [4Fe-4S] cluster as a cofactor.

It catalyses the reaction (2E)-4-hydroxy-3-methylbut-2-enyl diphosphate + oxidized [flavodoxin] + H2O + 2 H(+) = 2-C-methyl-D-erythritol 2,4-cyclic diphosphate + reduced [flavodoxin]. It functions in the pathway isoprenoid biosynthesis; isopentenyl diphosphate biosynthesis via DXP pathway; isopentenyl diphosphate from 1-deoxy-D-xylulose 5-phosphate: step 5/6. Functionally, converts 2C-methyl-D-erythritol 2,4-cyclodiphosphate (ME-2,4cPP) into 1-hydroxy-2-methyl-2-(E)-butenyl 4-diphosphate. The sequence is that of 4-hydroxy-3-methylbut-2-en-1-yl diphosphate synthase (flavodoxin) from Chlamydia trachomatis serovar D (strain ATCC VR-885 / DSM 19411 / UW-3/Cx).